Reading from the N-terminus, the 355-residue chain is Neutral protease 2 homolog AFUB_100460 (355 aa).

The first 19 residues, 1 to 19 (MKITALASAILAVAQGALA), serve as a signal peptide directing secretion. The propeptide occupies 20 to 172 (LPARAPALDI…PASIKPLDRR (153 aa)). Intrachain disulfides connect Cys179/Cys251 and Cys258/Cys276. Position 300 (His300) interacts with Zn(2+). Glu301 is a catalytic residue. The Zn(2+) site is built by His304 and Asp315.

Belongs to the peptidase M35 family. The cofactor is Zn(2+).

Its subcellular location is the secreted. The enzyme catalyses Preferential cleavage of bonds with hydrophobic residues in P1'. Also 3-Asn-|-Gln-4 and 8-Gly-|-Ser-9 bonds in insulin B chain.. In terms of biological role, secreted metalloproteinase that allows assimilation of proteinaceous substrates. Shows high activities on basic nuclear substrates such as histone and protamine. May be involved in virulence. This chain is Neutral protease 2 homolog AFUB_100460, found in Aspergillus fumigatus (strain CBS 144.89 / FGSC A1163 / CEA10) (Neosartorya fumigata).